Consider the following 751-residue polypeptide: Catalase-peroxidase (751 aa).

Residues 1–21 (MSNESKCPFHQTAGGGTTNRD) form a disordered region. The segment at residues 90–244 (WHSAGTYRIG…LAAVQMGLIY (155 aa)) is a cross-link (tryptophyl-tyrosyl-methioninium (Trp-Tyr) (with M-270)). H91 (proton acceptor) is an active-site residue. Positions 195–227 (YGKDQVKAQPPGQGDLVAEPAKHGEEQNRDLSA) are disordered. Residues 214–227 (PAKHGEEQNRDLSA) are compositionally biased toward basic and acidic residues. The tryptophyl-tyrosyl-methioninium (Tyr-Met) (with W-90) cross-link spans 244–270 (YVNPEGPEGNPDPVASGKDIRETFGRM). H285 is a binding site for heme b. Residues 365–387 (AHQWRPKEGKGAGTVPDAHDPGK) form a disordered region.

It belongs to the peroxidase family. Peroxidase/catalase subfamily. In terms of assembly, homodimer or homotetramer. It depends on heme b as a cofactor. Post-translationally, formation of the three residue Trp-Tyr-Met cross-link is important for the catalase, but not the peroxidase activity of the enzyme.

The catalysed reaction is H2O2 + AH2 = A + 2 H2O. The enzyme catalyses 2 H2O2 = O2 + 2 H2O. In terms of biological role, bifunctional enzyme with both catalase and broad-spectrum peroxidase activity. The sequence is that of Catalase-peroxidase from Pseudomonas putida (strain ATCC 700007 / DSM 6899 / JCM 31910 / BCRC 17059 / LMG 24140 / F1).